The sequence spans 316 residues: Homoserine kinase (316 aa).

It belongs to the pseudomonas-type ThrB family.

It catalyses the reaction L-homoserine + ATP = O-phospho-L-homoserine + ADP + H(+). The protein operates within amino-acid biosynthesis; L-threonine biosynthesis; L-threonine from L-aspartate: step 4/5. The polypeptide is Homoserine kinase (Pseudomonas aeruginosa (strain LESB58)).